Reading from the N-terminus, the 1737-residue chain is Myosin-M heavy chain (1737 aa).

The Myosin N-terminal SH3-like domain occupies 4 to 55 (LEGDIVWVPHTVNGYCRGKIIGYNEKNQVTVRLLELNEEIKINEQLIQNYNQ). A Myosin motor domain is found at 59-886 (KDFSDMVEIQ…LYIYLEKKRY (828 aa)). Residue 154–161 (GESGSGKT) coordinates ATP. A disordered region spans residues 640–727 (KSNDNNSNNN…NNNSSNNKKS (88 aa)). Composition is skewed to low complexity over residues 641-663 (SNDNNSNNNNSNNNSSSSSSSQS) and 679-724 (NSGS…SSNN). The interval 754-761 (YIRCIKPN) is actin-binding. IQ domains follow at residues 889–918 (LVDSVLKIQAFFKMIKIRNQYKRNKESSLF) and 912–941 (NKESSLFLQTLIRAQRAKKDFEQLVILENK). Positions 926-1039 (QRAKKDFEQL…KKKNEQNLSL (114 aa)) form a coiled coil. Residues 947–1028 (RKKELERQRK…IEKKRKEEEK (82 aa)) show a composition bias toward basic and acidic residues. Disordered stretches follow at residues 947–1099 (RKKE…PSTK), 1117–1199 (LHGS…PNFN), 1266–1290 (GINKPIPQRTISSSENSPLSRANSS), and 1304–1364 (SLST…SNED). Residues 1044-1070 (ITNSPSLINTTTTTTTTTTTTTNTSSP) show a composition bias toward low complexity. A compositionally biased stretch (pro residues) spans 1071–1081 (PLSPPISPRPS). Positions 1082-1098 (TPSSTSSSSSTTSSPST) are enriched in low complexity. A compositionally biased stretch (basic and acidic residues) spans 1121 to 1131 (SHSDKNSKEDN). Positions 1132-1141 (NSNNNNNGDS) are enriched in low complexity. The segment covering 1143-1153 (IILSSDSSFGQ) has biased composition (polar residues). A compositionally biased stretch (pro residues) spans 1162–1171 (PTPPPPPPLK). Composition is skewed to polar residues over residues 1180–1198 (GVENNSSPNLWSHRNSPNF) and 1274–1288 (RTISSSENSPLSRAN). Residues 1304–1359 (SLSTSTTPSTPTTPKTPTTLSSSSVSTSTSLSSVSSSVSSSSSSSIPTPIIESTPS) show a composition bias toward low complexity. Residues 1389–1572 (FRIKIINELI…SDIVQSINEA (184 aa)) form the DH domain. One can recognise a PH domain in the interval 1603–1714 (TLLMEGTVSA…WFKQIKALIQ (112 aa)).

This sequence belongs to the TRAFAC class myosin-kinesin ATPase superfamily. Myosin family. As to quaternary structure, monomer.

It localises to the cytoplasm. Myosins are actin-based motor molecules with ATPase activity. Involved in macropinocytosis and remodeling of actin cytoskeleton. This is Myosin-M heavy chain (myoM) from Dictyostelium discoideum (Social amoeba).